The primary structure comprises 127 residues: Holotricin-2 (127 aa).

A signal peptide spans 1–15 (MMKLVIALCLIGISA). Positions 16 to 55 (AYVVPVYYEIYPEDATFDEADIEPQLSPAELHHGSIRERR) are excised as a propeptide. The disordered stretch occupies residues 43-84 (PAELHHGSIRERRSLQPGAPSFPMPGSQLPTSVSGNVEKQGR). Residues 45–56 (ELHHGSIRERRS) show a composition bias toward basic and acidic residues. Over residues 70 to 84 (QLPTSVSGNVEKQGR) the composition is skewed to polar residues.

The protein belongs to the coleoptericin family. In terms of tissue distribution, hemolymph.

It localises to the secreted. Antibacterial activity against Gram-negative bacteria but not against Gram-positive bacteria. This is Holotricin-2 from Holotrichia diomphalia (Korean black chafer).